Here is a 95-residue protein sequence, read N- to C-terminus: Large ribosomal subunit protein uL23 (95 aa).

This sequence belongs to the universal ribosomal protein uL23 family. As to quaternary structure, part of the 50S ribosomal subunit. Contacts protein L29, and trigger factor when it is bound to the ribosome.

One of the early assembly proteins it binds 23S rRNA. One of the proteins that surrounds the polypeptide exit tunnel on the outside of the ribosome. Forms the main docking site for trigger factor binding to the ribosome. The protein is Large ribosomal subunit protein uL23 of Desulfitobacterium hafniense (strain DSM 10664 / DCB-2).